The following is an 853-amino-acid chain: DNA mismatch repair protein MutS (853 aa).

616–623 lines the ATP pocket; sequence GPNMGGKS.

This sequence belongs to the DNA mismatch repair MutS family.

Functionally, this protein is involved in the repair of mismatches in DNA. It is possible that it carries out the mismatch recognition step. This protein has a weak ATPase activity. In Erwinia tasmaniensis (strain DSM 17950 / CFBP 7177 / CIP 109463 / NCPPB 4357 / Et1/99), this protein is DNA mismatch repair protein MutS.